A 418-amino-acid polypeptide reads, in one-letter code: Serine/threonine transporter SstT (418 aa).

8 consecutive transmembrane segments (helical) span residues 21–41, 49–69, 83–103, 142–162, 190–210, 217–237, 299–319, and 331–351; these read ILIG…AAIA, FVGA…IASI, ILFL…VVSF, ALLN…GIAL, FAPL…GFGA, LLVV…PLIV, MAGA…TLGI, and VVAA…LLLI.

Belongs to the dicarboxylate/amino acid:cation symporter (DAACS) (TC 2.A.23) family.

The protein localises to the cell inner membrane. The enzyme catalyses L-serine(in) + Na(+)(in) = L-serine(out) + Na(+)(out). The catalysed reaction is L-threonine(in) + Na(+)(in) = L-threonine(out) + Na(+)(out). Functionally, involved in the import of serine and threonine into the cell, with the concomitant import of sodium (symport system). The chain is Serine/threonine transporter SstT from Yersinia pseudotuberculosis serotype O:1b (strain IP 31758).